The following is a 220-amino-acid chain: Putative threonylcarbamoyl-AMP synthase (220 aa).

A YrdC-like domain is found at 17-202; it reads ARGIASAVAA…TPRILRAGPV (186 aa).

It belongs to the SUA5 family.

The protein resides in the cytoplasm. The catalysed reaction is L-threonine + hydrogencarbonate + ATP = L-threonylcarbamoyladenylate + diphosphate + H2O. Functionally, required for the formation of a threonylcarbamoyl group on adenosine at position 37 (t(6)A37) in tRNAs that read codons beginning with adenine. Catalyzes the conversion of L-threonine, HCO(3)(-)/CO(2) and ATP to give threonylcarbamoyl-AMP (TC-AMP) as the acyladenylate intermediate, with the release of diphosphate. This chain is Putative threonylcarbamoyl-AMP synthase, found in Mycobacterium leprae (strain TN).